The sequence spans 514 residues: ATP synthase subunit alpha (514 aa).

Residue 170–177 (GDRQIGKT) coordinates ATP.

The protein belongs to the ATPase alpha/beta chains family. F-type ATPases have 2 components, CF(1) - the catalytic core - and CF(0) - the membrane proton channel. CF(1) has five subunits: alpha(3), beta(3), gamma(1), delta(1), epsilon(1). CF(0) has three main subunits: a(1), b(2) and c(9-12). The alpha and beta chains form an alternating ring which encloses part of the gamma chain. CF(1) is attached to CF(0) by a central stalk formed by the gamma and epsilon chains, while a peripheral stalk is formed by the delta and b chains.

Its subcellular location is the cell inner membrane. It catalyses the reaction ATP + H2O + 4 H(+)(in) = ADP + phosphate + 5 H(+)(out). In terms of biological role, produces ATP from ADP in the presence of a proton gradient across the membrane. The alpha chain is a regulatory subunit. The polypeptide is ATP synthase subunit alpha (Pseudomonas putida (strain ATCC 47054 / DSM 6125 / CFBP 8728 / NCIMB 11950 / KT2440)).